The chain runs to 1293 residues: Enterobactin synthase component F (1293 aa).

An elongation/condensation region spans residues 1–301 (MSQHLPLVAA…NVLPLGIHIA (301 aa)). The adenylatione stretch occupies residues 482-887 (SYREMREQVV…ALPDVEQAVT (406 aa)). The Carrier domain maps to 971–1046 (APKAGSETII…KLATIIDAEE (76 aa)). Ser-1006 bears the O-(pantetheine 4'-phosphoryl)serine mark. The thioesterase stretch occupies residues 1066 to 1293 (PTLFCFHPAS…GPIIRATLNR (228 aa)). The active-site Proton acceptor; for thioesterase activity is His-1271.

Belongs to the ATP-dependent AMP-binding enzyme family. EntF subfamily. In terms of assembly, proteins EntB, EntD, EntE and EntF are the component of the enterobactin synthase. Components probably do not form a stable complex. EntF acts as a catalytic monomer. Interacts with the MbtH-like protein YbdZ. YbdZ binds to the adenylation domain, but does not alter the structure of the domain. Pantetheine 4'-phosphate serves as cofactor. In terms of processing, 4'-phosphopantetheine is transferred from CoA to a specific serine of apo-EntF by EntD. Holo-EntF so formed is then acylated with seryl-AMP.

The protein localises to the cytoplasm. It catalyses the reaction 3 2,3-dihydroxybenzoate + 3 L-serine + 6 ATP = enterobactin + 6 AMP + 6 diphosphate + 4 H(+). The enzyme catalyses holo-[peptidyl-carrier protein] + L-serine + ATP = L-seryl-[peptidyl-carrier protein] + AMP + diphosphate. It functions in the pathway siderophore biosynthesis; enterobactin biosynthesis. Its activity is regulated as follows. Adenylation activity is increased in the presence of the MbtH-like protein YbdZ. Involved in the biosynthesis of the siderophore enterobactin (enterochelin), which is a macrocyclic trimeric lactone of N-(2,3-dihydroxybenzoyl)-serine. EntF catalyzes the activation of L-serine via ATP-dependent PPi exchange reaction to form seryladenylate. Activated L-serine is loaded onto the peptidyl carrier domain via a thioester linkage to the phosphopanthetheine moiety, forming seryl-S-Ppant-EntF. EntF acts then as the sole catalyst for the formation of the three amide and three ester linkages found in enterobactin, using seryladenylate and 2,3-dihydroxybenzoate-S-Ppant-EntB (DHB-S-Ppant-EntB) as substrates, via the formation of a DHB-Ser-S-Ppant-EntF intermediate. In Escherichia coli (strain K12), this protein is Enterobactin synthase component F.